A 429-amino-acid chain; its full sequence is DNA primase DnaG (429 aa).

Residues 172–246 (DSIIVVEGRN…DVDFIARAPP (75 aa)) enclose the Toprim domain. 3 residues coordinate Mg(2+): glutamate 178, aspartate 220, and aspartate 222. The tract at residues 287-322 (RNTKELEERQGNELKNERPEKINENEESEKNVELKE) is disordered.

The protein belongs to the archaeal DnaG primase family. In terms of assembly, forms a ternary complex with MCM helicase and DNA. Component of the archaeal exosome complex. It depends on Mg(2+) as a cofactor.

It carries out the reaction ssDNA + n NTP = ssDNA/pppN(pN)n-1 hybrid + (n-1) diphosphate.. Its function is as follows. RNA polymerase that catalyzes the synthesis of short RNA molecules used as primers for DNA polymerase during DNA replication. Also part of the exosome, which is a complex involved in RNA degradation. Acts as a poly(A)-binding protein that enhances the interaction between heteromeric, adenine-rich transcripts and the exosome. The protein is DNA primase DnaG of Picrophilus torridus (strain ATCC 700027 / DSM 9790 / JCM 10055 / NBRC 100828 / KAW 2/3).